We begin with the raw amino-acid sequence, 372 residues long: tRNA-specific 2-thiouridylase MnmA (372 aa).

ATP-binding positions include G11–S18 and M36. Positions N106–D108 are interaction with target base in tRNA. C111 (nucleophile) is an active-site residue. A disulfide bridge connects residues C111 and C204. G136 contacts ATP. The interval K154–Q156 is interaction with tRNA. C204 (cysteine persulfide intermediate) is an active-site residue. Positions R311 to Y312 are interaction with tRNA.

The protein belongs to the MnmA/TRMU family.

It is found in the cytoplasm. The enzyme catalyses S-sulfanyl-L-cysteinyl-[protein] + uridine(34) in tRNA + AH2 + ATP = 2-thiouridine(34) in tRNA + L-cysteinyl-[protein] + A + AMP + diphosphate + H(+). In terms of biological role, catalyzes the 2-thiolation of uridine at the wobble position (U34) of tRNA, leading to the formation of s(2)U34. The sequence is that of tRNA-specific 2-thiouridylase MnmA from Mycoplasmopsis synoviae (strain 53) (Mycoplasma synoviae).